A 387-amino-acid chain; its full sequence is Protein RecA (387 aa).

80–87 (GPESSGKT) is a binding site for ATP. The segment at 348-387 (LDDSEVAETEEETTASKTKAKAKKEEKAVETEEIELELED) is disordered. Composition is skewed to acidic residues over residues 349–360 (DDSEVAETEEET) and 378–387 (TEEIELELED).

It belongs to the RecA family.

The protein resides in the cytoplasm. In terms of biological role, can catalyze the hydrolysis of ATP in the presence of single-stranded DNA, the ATP-dependent uptake of single-stranded DNA by duplex DNA, and the ATP-dependent hybridization of homologous single-stranded DNAs. It interacts with LexA causing its activation and leading to its autocatalytic cleavage. The polypeptide is Protein RecA (Lactococcus lactis subsp. cremoris (strain MG1363)).